We begin with the raw amino-acid sequence, 302 residues long: Transmembrane protein 191 (302 aa).

Positions 5–147 form a coiled coil; that stretch reads QEQLLQLQKD…HLELAEAKFS (143 aa). Positions 39 to 66 are disordered; the sequence is LTGRLEELRERERSLQRRRSQASRAIRG. A compositionally biased stretch (basic and acidic residues) spans 42–53; the sequence is RLEELRERERSL. The chain crosses the membrane as a helical span at residues 242-262; the sequence is LQTLLLLPLGFLVLPLIYVVL.

This sequence belongs to the TMEM191 family.

It localises to the membrane. The chain is Transmembrane protein 191 from Mus musculus (Mouse).